A 961-amino-acid chain; its full sequence is Phosphofurin acidic cluster sorting protein 1 (961 aa).

Residues 1–19 are compositionally biased toward gly residues; that stretch reads MAERGGAGGGPGGAGGGSS. Disordered stretches follow at residues 1-70 and 76-95; these read MAER…SSST and VAVA…RTPA. Alanine 2 bears the N-acetylalanine mark. The span at 20-30 shows a compositional bias: low complexity; sequence QRGSGVAQSPQ. Serine 28 carries the post-translational modification Phosphoserine. A compositionally biased stretch (pro residues) spans 31 to 46; sequence QQPPQQPSQPQQPTPP. Threonine 44 bears the Phosphothreonine mark. A compositionally biased stretch (low complexity) spans 51 to 70; that stretch reads ATSSSSSTSAAAASSSSSST. Tyrosine 249 carries the phosphotyrosine modification. Residues 260–271 show a composition bias toward basic and acidic residues; the sequence is GIKSKLSDRSPD. Disordered stretches follow at residues 260–297 and 375–426; these read GIKS…LHGQ and NPSD…GKDT. Positions 274–291 are enriched in acidic residues; the sequence is NYSEEEEESFSSEQEGSD. The stretch at 351 to 375 forms a coiled coil; that stretch reads HVSREQIREVEEDLDELYDSLEMYN. Residues serine 377 and serine 379 each carry the phosphoserine modification. The segment covering 404–426 has biased composition (polar residues); the sequence is MSQSSSQTEIGSLNSKGSLGKDT. Phosphoserine occurs at positions 428 and 493. 2 disordered regions span residues 475–540 and 758–802; these read EKVK…HSTQ and SPST…SMSS. Threonine 502 carries the phosphothreonine modification. Serine 517, serine 526, serine 527, serine 529, and serine 532 each carry phosphoserine. Low complexity predominate over residues 768 to 802; that stretch reads SPVVSLTVPSTSPPSSSGLSRDATATPPSSPSMSS.

It belongs to the PACS family. Associates with AP-1 and AP-3 but not with AP-2 complexes. Interacts with FURIN. Forms a ternary complex with furin and AP-1. Interacts with PKD2 (via acidic region). Interacts with SORL1. Interacts with WDR37.

It localises to the golgi apparatus. The protein resides in the trans-Golgi network. In terms of biological role, coat protein that is involved in the localization of trans-Golgi network (TGN) membrane proteins that contain acidic cluster sorting motifs. Controls the endosome-to-Golgi trafficking of furin and mannose-6-phosphate receptor by connecting the acidic-cluster-containing cytoplasmic domain of these molecules with the adapter-protein complex-1 (AP-1) of endosomal clathrin-coated membrane pits. Required for normal ER Ca2+ handling in lymphocytes. Together with WDR37, it plays an essential role in lymphocyte development, quiescence and survival. Required for stabilizing peripheral lymphocyte populations. The protein is Phosphofurin acidic cluster sorting protein 1 (Pacs1) of Rattus norvegicus (Rat).